Here is a 592-residue protein sequence, read N- to C-terminus: MSQIKIELIKSINDLNSRGLLLSSKWSSEQLNGLSPTILATPLTNEEQLSIISQPSISSPPIGSNEYYKYILAKNYFDLKEYRRCSDVLIDCNKYQLPIFLRSYATYLAIEKRREEDIIEQQAQQQQQQQQAQQQAQQAQQESQQNDKNNDTNNNNKTDQQQQQQQQQKIEQCQEFKQLFQFYKKLYIENKKDMDGFLLYFYSMLLKKQRDFTMARKVLIESVHKYPCNWSAWSDLSSLCSDSADIIMQLSLPDHFMKDFFLAHFKLELQQNNESLVIYQQLSRTLFTQSTYILAQTAIGNYNLRAYDIGEELFERLIELEPNRLENIDIYSNILYVRDKKASLSMLAHKAMKIEKYCPETCCIIGNYYSLKLEHDKAILYFQRALKLNDRYLSAWTLIGHEFLEIKNVSAAINAYRKAVDINPRDYRAWYGLGQTYQLLKLPLYSLYYFKKATTLRPYDPRMWCAAGGCYEFIERIPEAIKCYERAEENYDRERVAINKLAKLYQEIQNNEKAAFYYKKNLYYCDQEKIDGQEIIDALLFLANFYKNQNQTQSEQYCLRLLDYAGPEKEEAKSILREIHSKSKLSSKSKPK.

TPR repeat units follow at residues 66–99 (EYYKYILAKNYFDLKEYRRCSDVLIDCNKYQLPI), 160–193 (QQQQQQQQQKIEQCQEFKQLFQFYKKLYIENKKD), 291–324 (TYILAQTAIGNYNLRAYDIGEELFERLIELEPNR), 359–392 (PETCCIIGNYYSLKLEHDKAILYFQRALKLNDRY), 393–426 (LSAWTLIGHEFLEIKNVSAAINAYRKAVDINPRD), 428–460 (RAWYGLGQTYQLLKLPLYSLYYFKKATTLRPYD), 461–494 (PRMWCAAGGCYEFIERIPEAIKCYERAEENYDRE), and 496–528 (VAINKLAKLYQEIQNNEKAAFYYKKNLYYCDQE). The interval 129 to 166 (QQQAQQQAQQAQQESQQNDKNNDTNNNNKTDQQQQQQQ) is disordered.

Belongs to the APC8/CDC23 family. As to quaternary structure, the APC/C is composed of at least 13 subunits that stay tightly associated throughout the cell cycle: anapc1, anapc2, anapc3, anapc4, anapc5, anapc6, anapc7, anapc8, anapc10, anapc11, cdc20, cdc26 and cdh1.

It is found in the nucleus. Its pathway is protein modification; protein ubiquitination. Functionally, component of the anaphase promoting complex/cyclosome (APC/C), a cell cycle-regulated E3 ubiquitin-protein ligase complex that controls progression through mitosis and the G1 phase of the cell cycle. The protein is Anaphase-promoting complex subunit 8 (anapc8) of Dictyostelium discoideum (Social amoeba).